The primary structure comprises 135 residues: NNCPQDWLPMNGLCYKIFDEQKAWEDAEMFCRKYKPGCHLASFHRYGESLEIAEYISDYHKGQAEVWIGLWDKKKDFSWEWTDRSCTDYLTWDKNQPDHYEGKEFCVELVSLTGYRLWNDQVCESKNAFLCQCKF.

Cystine bridges form between Cys-3-Cys-14, Cys-31-Cys-131, Cys-38-Cys-133, and Cys-106-Cys-123. In terms of domain architecture, C-type lectin spans 10–132 (MNGLCYKIFD…CESKNAFLCQ (123 aa)). Residues Gln-96, Asp-98, Glu-104, Asn-119, and Asp-120 each contribute to the Ca(2+) site. The Galactose-binding motif lies at 96 to 98 (QPD).

It belongs to the true venom lectin family. In terms of assembly, homodimer; disulfide-linked. In terms of tissue distribution, expressed by the venom gland.

The protein resides in the secreted. In terms of biological role, galactose-binding protein which recognizes specific carbohydrate structures and agglutinates a variety of animal cells by binding to cell-surface glycoproteins and glycolipids. Is a calcium-dependent lectin. Shows high hemagglutinating activity, that is inhibited by lactose, galactose and inositol. The polypeptide is C-type lectin LmsL (Lachesis stenophrys (Central American bushmaster)).